The sequence spans 430 residues: NEDD8-activating enzyme E1 catalytic subunit (430 aa).

Residue 52-76 participates in ATP binding; it reads GLGCELLKNLALSGFRTIEVIDMDT. The Glycyl thioester intermediate role is filled by Cys-211.

It belongs to the ubiquitin-activating E1 family. UBA3 subfamily. As to quaternary structure, heterodimer of uba-3 and ula-1. Interacts with NEDD8 and ubc-12. As to expression, expressed in intestine, vulva epithelium and head and tail neurons.

Its subcellular location is the nucleus. The protein localises to the cytoplasm. The catalysed reaction is ATP + [NEDD8 protein] + [E1 NEDD8-activating enzyme]-L-cysteine = AMP + diphosphate + [E1 NEDD8-activating enzyme]-S-[NEDD8 protein]-yl-L-cysteine.. The protein operates within protein modification; protein neddylation. Its function is as follows. Catalytic subunit of the dimeric rfl-1 (uba-3)-ula-1 E1 enzyme. E1 activates NEDD8 by first adenylating its C-terminal glycine residue with ATP, thereafter linking this residue to the side chain of the catalytic cysteine, yielding a NEDD8-uba-3 thioester and free AMP. E1 finally transfers NEDD8 to the catalytic cysteine of ubc-12. Required for cytokinesis and mitotic spindle orientation during early embryogenesis. This is NEDD8-activating enzyme E1 catalytic subunit from Caenorhabditis elegans.